Consider the following 224-residue polypeptide: Putative carbamate hydrolase RutD (224 aa).

The AB hydrolase-1 domain occupies 14 to 115 (PVVVLISGLG…TVLVSVNGWL (102 aa)).

This sequence belongs to the AB hydrolase superfamily. Hydrolase RutD family.

It catalyses the reaction carbamate + 2 H(+) = NH4(+) + CO2. Its function is as follows. Involved in pyrimidine catabolism. May facilitate the hydrolysis of carbamate, a reaction that can also occur spontaneously. This chain is Putative carbamate hydrolase RutD, found in Shigella dysenteriae serotype 1 (strain Sd197).